Here is an 816-residue protein sequence, read N- to C-terminus: Two pore channel protein 1 (816 aa).

At 1–112 (MAVSLDDDVP…AHNHLFYLME (112 aa)) the chain is on the cytoplasmic side. The tract at residues 17–64 (EGGSAPLAPSNGLGQEELPSKNGGSYAIHDSQAPSLSSGGESSPSSPA) is disordered. Positions 50–63 (PSLSSGGESSPSSP) are enriched in low complexity. The helical transmembrane segment at 113–133 (LATALLLLLLSLCEAPAVPAL) threads the bilayer. Arginine 134 is a topological domain (extracellular). The chain crosses the membrane as a helical span at residues 135 to 155 (LGIYVHATLELFALMVVVFEL). Residues 156 to 177 (CMKLRWLGLHTFIRHKRTMVKT) are Cytoplasmic-facing. A helical membrane pass occupies residues 178-198 (SVLVVQFVEAIVVLVRQMSHV). The Extracellular portion of the chain corresponds to 199–200 (RV). Residues 201 to 220 (TRALRCIFLVDCRYCGGVRR) form a helical membrane-spanning segment. Over 221–234 (NLRQIFQSLPPFMD) the chain is Cytoplasmic. A helical transmembrane segment spans residues 235–255 (ILLLLLFFMIIFAILGFYLFS). Topologically, residues 256–262 (PNPSDPY) are extracellular. Positions 263 to 286 (FSTLENSIVSLFVLLTTANFPDVM) form an intramembrane region, helical; Pore-forming. Residues 287–294 (MPSYSRNP) lie on the Extracellular side of the membrane. Residues 295-315 (WSCVFFIVYLSIELYFIMNLL) traverse the membrane as a helical segment. Residues 316 to 444 (LAVVFDTFND…NILVKSKAFQ (129 aa)) lie on the Cytoplasmic side of the membrane. The chain crosses the membrane as a helical span at residues 445–465 (YFMYLVVAVNGVWILVETFML). Residues 466-479 (KGGNFFSKHVPWSY) are Extracellular-facing. Residues 480–500 (LVFLTIYGVELFLKVAGLGPV) traverse the membrane as a helical segment. At 501–503 (EYL) the chain is on the cytoplasmic side. A helical membrane pass occupies residues 504 to 526 (SSGWNLFDFSVTVFAFLGLLALA). At 527–534 (LNMEPFYF) the chain is on the extracellular side. Residues 535 to 549 (IVVLRPLQLLRLFKL) traverse the membrane as a helical segment. The Cytoplasmic segment spans residues 550–573 (KERYRNVLDTMFELLPRMASLGLT). The helical transmembrane segment at 574-594 (LLIFYYSFAIVGMEFFCGIVF) threads the bilayer. Topologically, residues 595–629 (PNCCNTSTVADAYRWRNHTVGNRTVVEEGYYYLNN) are extracellular. N-linked (GlcNAc...) asparagine glycosylation is found at asparagine 599, asparagine 611, and asparagine 616. An intramembrane region (helical; Pore-forming) is located at residues 630–653 (FDNILNSFVTLFELTVVNNWYIIM). Over 654 to 670 (EGVTSQTSHWSRLYFMT) the chain is Extracellular. Residues 671–691 (FYIVTMVVMTIIVAFILEAFV) form a helical membrane-spanning segment. The Cytoplasmic segment spans residues 692–816 (FRMNYSRKNQ…GSRQRSQTVT (125 aa)). Residues 769 to 796 (SLKMYQEEIQEWYEEHAREQEQQRQLSS) are a coiled coil. The disordered stretch occupies residues 782–816 (EEHAREQEQQRQLSSSAAPAAQQPPGSRQRSQTVT). Residues 791–816 (QRQLSSSAAPAAQQPPGSRQRSQTVT) are compositionally biased toward low complexity.

The protein belongs to the calcium channel alpha-1 subunit (TC 1.A.1.11) family. Two pore calcium channel subfamily. As to quaternary structure, dimer. Interacts with MTOR; the interaction is required for TPCN1 ATP sensitivity. Interacts with STX7, STX8 and STX12. Interacts with JPT2. Found in a complex with LSM12, TPCN1 and TPCN2. Post-translationally, N-glycosylated. In terms of tissue distribution, highest expression found in the heart and kidney, and lowest expression found in the spleen.

It localises to the lysosome membrane. The protein localises to the endosome membrane. The protein resides in the early endosome membrane. Its subcellular location is the recycling endosome membrane. The enzyme catalyses Na(+)(in) = Na(+)(out). It catalyses the reaction Ca(2+)(in) = Ca(2+)(out). Na(+) current is inhibited by ATP in a MTORC-dependent manner. ATP sensitivity is independent of PI(3,5)P2. Probably regulated by Mg(2+) ions, cytosolic Mg(2+) selectively inhibits outward current while lysosomal Mg(2+) modestly inhibits both the outward and inward currents. In the absence of Mg(2+), NAADP readily activates TPCN2, with properties similar to PI(3,5)P2. Both current elicited by PI(3,5)P2 as well as NAADP are inhibited by tetrandrine. In terms of biological role, intracellular channel initially characterized as a non-selective Ca(2+)-permeable channel activated by NAADP (nicotinic acid adenine dinucleotide phosphate), it is also a voltage-gated highly-selective Na(+) channel activated directly by PI(3,5)P2 (phosphatidylinositol 3,5-bisphosphate) that senses pH changes and confers electrical excitability to organelles. Localizes to the early and recycling endosomes membranes where it plays a role in the uptake and processing of proteins and regulates organellar membrane excitability, membrane trafficking and pH homeostasis. Ion selectivity is not fixed but rather agonist-dependent and under defined ionic conditions, can be readily activated by both NAADP and PI(3,5)P2. Required for mTOR-dependent nutrient sensing. Its function is as follows. (Microbial infection) During Ebola virus (EBOV) infection, controls the movement of endosomes containing virus particles and is required by EBOV to escape from the endosomal network into the cell cytoplasm. The protein is Two pore channel protein 1 of Homo sapiens (Human).